Reading from the N-terminus, the 355-residue chain is Phosphoribosylformylglycinamidine cyclo-ligase (355 aa).

It belongs to the AIR synthase family.

It localises to the cytoplasm. The enzyme catalyses 2-formamido-N(1)-(5-O-phospho-beta-D-ribosyl)acetamidine + ATP = 5-amino-1-(5-phospho-beta-D-ribosyl)imidazole + ADP + phosphate + H(+). Its pathway is purine metabolism; IMP biosynthesis via de novo pathway; 5-amino-1-(5-phospho-D-ribosyl)imidazole from N(2)-formyl-N(1)-(5-phospho-D-ribosyl)glycinamide: step 2/2. This chain is Phosphoribosylformylglycinamidine cyclo-ligase, found in Hamiltonella defensa subsp. Acyrthosiphon pisum (strain 5AT).